We begin with the raw amino-acid sequence, 349 residues long: Protein RecA (349 aa).

ATP is bound at residue 65–72 (GPESSGKT). A disordered region spans residues 329-349 (KASDQTAAHDETEEEPDLLES). Residues 339–349 (ETEEEPDLLES) show a composition bias toward acidic residues.

It belongs to the RecA family.

The protein localises to the cytoplasm. Its function is as follows. Can catalyze the hydrolysis of ATP in the presence of single-stranded DNA, the ATP-dependent uptake of single-stranded DNA by duplex DNA, and the ATP-dependent hybridization of homologous single-stranded DNAs. It interacts with LexA causing its activation and leading to its autocatalytic cleavage. The polypeptide is Protein RecA (Acinetobacter baylyi (strain ATCC 33305 / BD413 / ADP1)).